Here is a 195-residue protein sequence, read N- to C-terminus: Triosephosphate isomerase, cytosolic (195 aa).

The active-site Electrophile is His37. Residue Glu107 is the Proton acceptor of the active site.

It belongs to the triosephosphate isomerase family. As to quaternary structure, homodimer.

It is found in the cytoplasm. The catalysed reaction is D-glyceraldehyde 3-phosphate = dihydroxyacetone phosphate. Its pathway is carbohydrate biosynthesis; gluconeogenesis. The protein operates within carbohydrate degradation; glycolysis; D-glyceraldehyde 3-phosphate from glycerone phosphate: step 1/1. In Lactuca sativa (Garden lettuce), this protein is Triosephosphate isomerase, cytosolic.